A 257-amino-acid polypeptide reads, in one-letter code: 3-deoxy-manno-octulosonate cytidylyltransferase (257 aa).

This sequence belongs to the KdsB family.

The protein localises to the cytoplasm. The enzyme catalyses 3-deoxy-alpha-D-manno-oct-2-ulosonate + CTP = CMP-3-deoxy-beta-D-manno-octulosonate + diphosphate. It participates in nucleotide-sugar biosynthesis; CMP-3-deoxy-D-manno-octulosonate biosynthesis; CMP-3-deoxy-D-manno-octulosonate from 3-deoxy-D-manno-octulosonate and CTP: step 1/1. Its pathway is bacterial outer membrane biogenesis; lipopolysaccharide biosynthesis. Activates KDO (a required 8-carbon sugar) for incorporation into bacterial lipopolysaccharide in Gram-negative bacteria. In Halorhodospira halophila (strain DSM 244 / SL1) (Ectothiorhodospira halophila (strain DSM 244 / SL1)), this protein is 3-deoxy-manno-octulosonate cytidylyltransferase.